Reading from the N-terminus, the 492-residue chain is Glutamyl-tRNA(Gln) amidotransferase subunit A (492 aa).

Catalysis depends on charge relay system residues lysine 79 and serine 154. Serine 178 serves as the catalytic Acyl-ester intermediate.

Belongs to the amidase family. GatA subfamily. As to quaternary structure, heterotrimer of A, B and C subunits.

It carries out the reaction L-glutamyl-tRNA(Gln) + L-glutamine + ATP + H2O = L-glutaminyl-tRNA(Gln) + L-glutamate + ADP + phosphate + H(+). Functionally, allows the formation of correctly charged Gln-tRNA(Gln) through the transamidation of misacylated Glu-tRNA(Gln) in organisms which lack glutaminyl-tRNA synthetase. The reaction takes place in the presence of glutamine and ATP through an activated gamma-phospho-Glu-tRNA(Gln). In Acinetobacter baylyi (strain ATCC 33305 / BD413 / ADP1), this protein is Glutamyl-tRNA(Gln) amidotransferase subunit A.